The chain runs to 56 residues: Large ribosomal subunit protein bL32 (56 aa).

Residues 1 to 39 form a disordered region; it reads MAVQQNKKSRSKRGMRRSHDSLSTAQLSVDATSGELHRR. Positions 7-16 are enriched in basic residues; that stretch reads KKSRSKRGMR. Residues 21-31 show a composition bias toward polar residues; that stretch reads SLSTAQLSVDA.

It belongs to the bacterial ribosomal protein bL32 family.

The polypeptide is Large ribosomal subunit protein bL32 (Shewanella piezotolerans (strain WP3 / JCM 13877)).